The primary structure comprises 359 residues: Peptide chain release factor 1 (359 aa).

An N5-methylglutamine modification is found at glutamine 236.

Belongs to the prokaryotic/mitochondrial release factor family. Methylated by PrmC. Methylation increases the termination efficiency of RF1.

It localises to the cytoplasm. In terms of biological role, peptide chain release factor 1 directs the termination of translation in response to the peptide chain termination codons UAG and UAA. The protein is Peptide chain release factor 1 (prfA) of Mycoplasma genitalium (strain ATCC 33530 / DSM 19775 / NCTC 10195 / G37) (Mycoplasmoides genitalium).